A 33-amino-acid polypeptide reads, in one-letter code: Cytochrome b6-f complex subunit 8 (33 aa).

Residues 2-22 traverse the membrane as a helical segment; that stretch reads LITLGWASLAALFSFSIAMVV.

It belongs to the PetN family. The 4 large subunits of the cytochrome b6-f complex are cytochrome b6, subunit IV (17 kDa polypeptide, PetD), cytochrome f and the Rieske protein, while the 4 small subunits are PetG, PetL, PetM and PetN. The complex functions as a dimer.

The protein localises to the plastid. It localises to the organellar chromatophore thylakoid membrane. In terms of biological role, component of the cytochrome b6-f complex, which mediates electron transfer between photosystem II (PSII) and photosystem I (PSI), cyclic electron flow around PSI, and state transitions. The polypeptide is Cytochrome b6-f complex subunit 8 (Paulinella chromatophora).